The primary structure comprises 89 residues: Small ribosomal subunit protein uS15 (89 aa).

The protein belongs to the universal ribosomal protein uS15 family. In terms of assembly, part of the 30S ribosomal subunit. Forms a bridge to the 50S subunit in the 70S ribosome, contacting the 23S rRNA.

Its function is as follows. One of the primary rRNA binding proteins, it binds directly to 16S rRNA where it helps nucleate assembly of the platform of the 30S subunit by binding and bridging several RNA helices of the 16S rRNA. Functionally, forms an intersubunit bridge (bridge B4) with the 23S rRNA of the 50S subunit in the ribosome. In Azorhizobium caulinodans (strain ATCC 43989 / DSM 5975 / JCM 20966 / LMG 6465 / NBRC 14845 / NCIMB 13405 / ORS 571), this protein is Small ribosomal subunit protein uS15.